A 101-amino-acid chain; its full sequence is Urease subunit beta (101 aa).

The protein belongs to the urease beta subunit family. As to quaternary structure, heterotrimer of UreA (gamma), UreB (beta) and UreC (alpha) subunits. Three heterotrimers associate to form the active enzyme.

It is found in the cytoplasm. It catalyses the reaction urea + 2 H2O + H(+) = hydrogencarbonate + 2 NH4(+). The protein operates within nitrogen metabolism; urea degradation; CO(2) and NH(3) from urea (urease route): step 1/1. The polypeptide is Urease subunit beta (Saccharophagus degradans (strain 2-40 / ATCC 43961 / DSM 17024)).